The primary structure comprises 946 residues: Protein translocase subunit SecA (946 aa).

Residues glutamine 89, 107 to 111, and aspartate 508 contribute to the ATP site; that span reads GEGKT. The tract at residues 534–569 is disordered; it reads PEDSHKPPVPLQRRKDSSVGFGKEENNSKDKKVNHS. The span at 546-569 shows a compositional bias: basic and acidic residues; that stretch reads RRKDSSVGFGKEENNSKDKKVNHS.

The protein belongs to the SecA family. As to quaternary structure, monomer and homodimer. Part of the essential Sec protein translocation apparatus which comprises SecA, SecYEG and auxiliary proteins SecDF. Other proteins may also be involved.

It is found in the cell inner membrane. Its subcellular location is the cellular thylakoid membrane. It localises to the cytoplasm. The enzyme catalyses ATP + H2O + cellular proteinSide 1 = ADP + phosphate + cellular proteinSide 2.. Functionally, part of the Sec protein translocase complex. Interacts with the SecYEG preprotein conducting channel. Has a central role in coupling the hydrolysis of ATP to the transfer of proteins into and across the cell membrane, serving as an ATP-driven molecular motor driving the stepwise translocation of polypeptide chains across the membrane. In terms of biological role, probably participates in protein translocation into and across both the cytoplasmic and thylakoid membranes in cyanobacterial cells. The polypeptide is Protein translocase subunit SecA (Prochlorococcus marinus (strain SARG / CCMP1375 / SS120)).